Consider the following 256-residue polypeptide: NifU-like protein, mitochondrial (256 aa).

The CxxC motif signature appears at C196–C199.

It belongs to the NifU family. As to quaternary structure, homodimer; in absence of BOL3, probably bridged by an iron-sulfure cluster. Interacts with BOL3. Interacts with apo-target proteins, such as ACO1, LYS4, ACO2 and SDH2.

Its subcellular location is the mitochondrion matrix. Functionally, involved in iron homeostasis within the mitochondrion where it is involved in the assembly of iron-sulfur proteins. Together with BOL3, required during the last step of iron-sulfur protein assembly when the iron-sulfur cluster is inserted into the target protein. Required for protecting iron sulfur clusters from oxidative damage. The polypeptide is NifU-like protein, mitochondrial (NFU1) (Saccharomyces cerevisiae (strain ATCC 204508 / S288c) (Baker's yeast)).